The primary structure comprises 312 residues: TATA box-binding protein-like 2 (312 aa).

The interval 65–115 (DELSTQDEPSQVEKESKNEDSGIYTDCPQKESTQADIDTSNSAQNTSQFNL) is disordered. The segment covering 75–84 (QVEKESKNED) has biased composition (basic and acidic residues). Polar residues predominate over residues 94–115 (KESTQADIDTSNSAQNTSQFNL).

The protein belongs to the TBP family. In terms of tissue distribution, in adults, expressed in the gonads, with expression much higher in the ovary than the testis (at protein level). Shows a small amount of expression in other adult organs, including the brain and kidney. Embryonic expression is mostly ubiquitous except in early gastrula embryos where expression is asymmetric.

The protein localises to the nucleus. Functionally, TATA box-binding transcription factor. Members of the TBP family are differentially required to regulate transcription and development during early embryogenesis. Commits mesoderm to the hematopoietic lineage during hemopoiesis, acting via mespa. Binds to the mespa promoter. The sequence is that of TATA box-binding protein-like 2 from Danio rerio (Zebrafish).